The following is a 117-amino-acid chain: Large ribosomal subunit protein bL20 (117 aa).

The protein belongs to the bacterial ribosomal protein bL20 family.

Binds directly to 23S ribosomal RNA and is necessary for the in vitro assembly process of the 50S ribosomal subunit. It is not involved in the protein synthesizing functions of that subunit. The polypeptide is Large ribosomal subunit protein bL20 (Helicobacter hepaticus (strain ATCC 51449 / 3B1)).